The primary structure comprises 212 residues: MLASQVVSSVVKPSWFARPTCVVAADLIGKVLCRELTDSDGQQKILRMRISETEAYIGEGDAACHAHAGTRTPRTEIMYHIGGVFYVYLTYGIHHMLNLVSGPTESPEAVLIRAGFLIEGSARLMNEQLLDVNRQLNHIKQLAGPGKLTKGLQIDRTLYGKPITPASKVWVEDDGCQPLVSLRPRIGIDYAGDAKEWLLRYIWTDHPSLSKK.

Belongs to the DNA glycosylase MPG family.

The polypeptide is Putative 3-methyladenine DNA glycosylase (Psychrobacter cryohalolentis (strain ATCC BAA-1226 / DSM 17306 / VKM B-2378 / K5)).